The following is a 437-amino-acid chain: MNAYQNKNITIIGLGKTGLSCVDYLLSQQANIRVIDTRKNPTGIDKLPQNIPLHTGSLNQEWLLESDMIVISPGLAVKTPEIQTALKAGVEVIGDIELFCRAATKPIVGITGSNGKSTVTTLVYEMAKAAGVKVGMGGNIGIPALSLLNEDCELYVLELSSFQLETTYSLKAAAATVLNVTEDHMDRYMDLEDYRQAKLRIYHNAKVGVLNNEDRLTFGENENQAKHTVSFAENSADYWLKTENGKQYLMVKDEVILPCEEATLVGRHNYMNILAATALAQAIGINLDSIRTALRHFKGLDHRFQLVHQANGIRWINDSKATNVGSTVAALAGLYIEGKLHLLLGGDGKGADFSELAELINQPHIICYCFGRDGALLAKFSSQSYLFDTMEQAIEFLRPTLQSGDMVLLSPACASLDQFASFEKRGEEFTHLAQCLT.

Residue G112–T118 coordinates ATP.

It belongs to the MurCDEF family.

The protein resides in the cytoplasm. The catalysed reaction is UDP-N-acetyl-alpha-D-muramoyl-L-alanine + D-glutamate + ATP = UDP-N-acetyl-alpha-D-muramoyl-L-alanyl-D-glutamate + ADP + phosphate + H(+). The protein operates within cell wall biogenesis; peptidoglycan biosynthesis. In terms of biological role, cell wall formation. Catalyzes the addition of glutamate to the nucleotide precursor UDP-N-acetylmuramoyl-L-alanine (UMA). This Haemophilus influenzae (strain ATCC 51907 / DSM 11121 / KW20 / Rd) protein is UDP-N-acetylmuramoylalanine--D-glutamate ligase (murD).